We begin with the raw amino-acid sequence, 220 residues long: Probable septum site-determining protein MinC (220 aa).

This sequence belongs to the MinC family. In terms of assembly, interacts with MinD and FtsZ.

Cell division inhibitor that blocks the formation of polar Z ring septums. Rapidly oscillates between the poles of the cell to destabilize FtsZ filaments that have formed before they mature into polar Z rings. Prevents FtsZ polymerization. The sequence is that of Probable septum site-determining protein MinC from Vibrio parahaemolyticus serotype O3:K6 (strain RIMD 2210633).